A 30-amino-acid chain; its full sequence is Acidic phospholipase A2 homolog cannitoxin gamma chain (30 aa).

Heterotrimer of alpha, beta, and gamma chains; non-covalently linked. Glycosylated. In terms of tissue distribution, expressed by the venom gland.

It localises to the secreted. In terms of biological role, heterotrimer: Snake venom phospholipase A2 (PLA2) heterotrimer that acts as a potent presynaptic neurotoxin by blocking synaptic transmission and synaptic vesicle recycling. Enzymatic activity is essential for the neurotoxic effects. May act by binding in a calcium-dependent fashion to neurotonal pentraxin-1 (NPTX1) and neurotonal pentraxin-2 (NPTX2), but not to neuronal pentraxin receptor (NPTXR). Also binds to taipoxin-associated calcium binding protein 49 (RCN2), a protein localized in the lumen of endoplasmic reticulum. Monomer (gamma chain): Snake venom phospholipase A2 homolog that is neither toxic nor enzymatically active. Does not bind calcium. This Oxyuranus scutellatus canni (Papuan taipan) protein is Acidic phospholipase A2 homolog cannitoxin gamma chain.